The following is a 707-amino-acid chain: G protein-coupled receptor kinase 2 (707 aa).

The segment at 1–190 (MADLEAVLAD…ELNMQLTMND (190 aa)) is N-terminal. The 122-residue stretch at 54-175 (KFDKIFNQKL…LESDKFTRFC (122 aa)) folds into the RGS domain. In terms of domain architecture, Protein kinase spans 191–455 (FSVHRIIGRG…PTEVKEHPFF (265 aa)). Residues 197-205 (IGRGGFGEV) and K220 each bind ATP. D318 acts as the Proton acceptor in catalysis. The AGC-kinase C-terminal domain occupies 456 to 523 (KDVDWQTVYL…VISERWQNEI (68 aa)). Residues 558–658 (DVIVHGYIKK…WHTSLRTAHK (101 aa)) form the PH domain.

It belongs to the protein kinase superfamily. AGC Ser/Thr protein kinase family. GPRK subfamily. As to quaternary structure, interacts with amx-2; the interaction promotes phosphorylation of amx-2. As to expression, expressed in many neurons in the adult including the ASH neurons and other sensory neurons, many interneurons, and motor neurons of the ventral nerve cord. Expressed broadly in head neurons and is detected in several head acetylcholine neurons including the AVA, AVB, AVD and AVE premotor interneurons, the SMD and RMD head motor neurons, and the AIN, AIY, SIA, SIB and SAA interneurons. Expressed in HSN motor neurons and VC4/VC5 motor neurons. Also expressed in vulval muscle cells. Expressed in premotor and RIS interneurons. Expressed in ciliated neurons such as AWA, AWB, AWC, ASH and ADF olfactory and nociceptive neurons, and in chemosensory ASH neurons. Expressed in RMG neurons and AVK interneurons.

It carries out the reaction [G-protein-coupled receptor] + ATP = [G-protein-coupled receptor]-phosphate + ADP + H(+). Its function is as follows. Specifically phosphorylates the activated forms of G protein-coupled receptors. Required in adult sensory neurons for chemotaxis. Plays a role in the ASH sensory neurons in the chemotaxis response to NaCl where it is likely to modulate the strength of the NaCl avoidance response which occurs at high NaCl concentrations. Required in the HSN motor neurons for normal egg laying by promoting phosphorylation of amine oxidase amx-2 which inhibits amx-2 activity, preventing metabolism of serotonin. Acts in head acetylcholine neurons to positively regulate locomotion. Inactivates dopamine receptor dop-3 which leads to inactivation of guanine nucleotide-binding protein G(o) subunit goa-1 and activation of the unc-77/nca-1 and nca-2 ion channel proteins. Acts as a positive regulator of swimming by inactivating two dopamine receptors, dop-3 in the premotor interneurons that negatively controls early swimming through the nca ion channel, and dop-1 in the RIS neuron that inhibits late-stage swimming via the signaling of FMRFamide-like neuropeptide flp-11. Controls movement quiescence by negatively regulating multiple targets including egl-4 in ciliated neurons, the level of ligands of the neuropeptide receptor npr-1 in RMG neurons, and the secretion of flp-1 from AVK interneurons. The protein is G protein-coupled receptor kinase 2 (grk-2) of Caenorhabditis elegans.